The chain runs to 680 residues: Potassium-transporting ATPase ATP-binding subunit (680 aa).

The next 4 membrane-spanning stretches (helical) occupy residues 37-57, 69-89, 223-243, and 257-277; these read VIFVTEAMAALVTLFFVLDVA, IAAWLWFTVLFATFAEAVAEG, ILLSGLTLIFLIAVVTLWGLA, and ALLVTLIPTTIGGLLSAIGIA. D307 functions as the 4-aspartylphosphate intermediate in the catalytic mechanism. Residues D344, E348, 375-382, and K393 contribute to the ATP site; that span reads FTAETRLS. Mg(2+) contacts are provided by D516 and D520. A run of 3 helical transmembrane segments spans residues 586-606, 614-634, and 652-672; these read FAIIPALFVTTYPALGVLNIM, AILSAVIFNALIIVALIPLAL, and LLVYGLGGLVLPFAGIKLIDL.

Belongs to the cation transport ATPase (P-type) (TC 3.A.3) family. Type IA subfamily. In terms of assembly, the system is composed of three essential subunits: KdpA, KdpB and KdpC.

It is found in the cell inner membrane. The catalysed reaction is K(+)(out) + ATP + H2O = K(+)(in) + ADP + phosphate + H(+). In terms of biological role, part of the high-affinity ATP-driven potassium transport (or Kdp) system, which catalyzes the hydrolysis of ATP coupled with the electrogenic transport of potassium into the cytoplasm. This subunit is responsible for energy coupling to the transport system and for the release of the potassium ions to the cytoplasm. The chain is Potassium-transporting ATPase ATP-binding subunit from Rhizobium meliloti (strain 1021) (Ensifer meliloti).